We begin with the raw amino-acid sequence, 546 residues long: DDB1- and CUL4-associated factor 11 (546 aa).

Residues 1–19 (MGSRNSSSAGSGSGDPSEG) are compositionally biased toward low complexity. Positions 1 to 40 (MGSRNSSSAGSGSGDPSEGLTRRGAGLRRSEEEEEEDEDV) are disordered. Residue S75 is modified to Phosphoserine. 7 WD repeats span residues 170–210 (SYSQ…RKFK), 216–258 (DVGW…TALD), 263–302 (ERRFAVFSIAVSSDGREVLGGANDGCLYVFDREQNRRTLQ), 305–345 (SHED…EDDP), 353–392 (GHQDGITFIDSKGDARYLISNSKDQTIKLWDIRRFSSREG), 435–480 (GVLH…KKLT), and 481–520 (NHKACVRDVSWHPFEEKIVSSSWDGNLRLWQYRQAEYFQD). Residues 523 to 546 (PESEECASAPAPVPRSSTPFSSPQ) form a disordered region. Residues 537-546 (RSSTPFSSPQ) are compositionally biased toward polar residues.

As to quaternary structure, interacts with DDB1 and CUL4A.

It functions in the pathway protein modification; protein ubiquitination. Its function is as follows. May function as a substrate receptor for CUL4-DDB1 E3 ubiquitin-protein ligase complex. In Pongo abelii (Sumatran orangutan), this protein is DDB1- and CUL4-associated factor 11 (DCAF11).